The chain runs to 362 residues: 3-dehydroquinate synthase (362 aa).

Residues Asp-71–Lys-76, Gly-105–Asp-109, Thr-129–Thr-130, Lys-142, Lys-151, and Cys-169–Thr-172 contribute to the NAD(+) site. 3 residues coordinate Zn(2+): Glu-184, His-247, and His-264.

This sequence belongs to the sugar phosphate cyclases superfamily. Dehydroquinate synthase family. Co(2+) serves as cofactor. The cofactor is Zn(2+). NAD(+) is required as a cofactor.

The protein localises to the cytoplasm. The catalysed reaction is 7-phospho-2-dehydro-3-deoxy-D-arabino-heptonate = 3-dehydroquinate + phosphate. The protein operates within metabolic intermediate biosynthesis; chorismate biosynthesis; chorismate from D-erythrose 4-phosphate and phosphoenolpyruvate: step 2/7. Its function is as follows. Catalyzes the conversion of 3-deoxy-D-arabino-heptulosonate 7-phosphate (DAHP) to dehydroquinate (DHQ). This chain is 3-dehydroquinate synthase, found in Citrobacter koseri (strain ATCC BAA-895 / CDC 4225-83 / SGSC4696).